The sequence spans 425 residues: MREPDFLNHFLKKGYFKKHAKAVLALSGGLDSMFLFKVLSTYQKELEIELILAHVNHKQRIESDWEEKELRKLAAEAELPIYISNFSGEFSEARARNFRYDFFQEVMKKTGATALVTAHHADDQVETILMRLIRGTRLRYLSGIKEKQVVGEIEIIRPFLHFQKKDFPSIFHFEDTSNQENHYFRNRIRNSYLPELEKENPRFRDAILGIGNEILDYDLAIAELSNNINVEDLQQLFSYSESTQRVLLQTYLNRFPDLNLTKAQFAEVQQILKSKSQYRHPIKNGYELIKEYQQFQICKISPQADEKEDELVLHYQNQVAYQGYLFSFGLPLEGESIQQIPVSRETSIHIRHRKTGDVLIQNGHRKKLRRLFIDLKIPMEKRNSALIIEQFGEIVSILGIATNNLSKKTKNDIMNTVLYIEKIDR.

27–32 (SGGLDS) contributes to the ATP binding site.

This sequence belongs to the tRNA(Ile)-lysidine synthase family.

It localises to the cytoplasm. The catalysed reaction is cytidine(34) in tRNA(Ile2) + L-lysine + ATP = lysidine(34) in tRNA(Ile2) + AMP + diphosphate + H(+). Its function is as follows. Ligates lysine onto the cytidine present at position 34 of the AUA codon-specific tRNA(Ile) that contains the anticodon CAU, in an ATP-dependent manner. Cytidine is converted to lysidine, thus changing the amino acid specificity of the tRNA from methionine to isoleucine. This Streptococcus pneumoniae (strain Taiwan19F-14) protein is tRNA(Ile)-lysidine synthase.